A 435-amino-acid polypeptide reads, in one-letter code: tRNA-2-methylthio-N(6)-dimethylallyladenosine synthase (435 aa).

The region spanning methionine 1–valine 117 is the MTTase N-terminal domain. Cysteine 10, cysteine 46, cysteine 80, cysteine 156, cysteine 160, and cysteine 163 together coordinate [4Fe-4S] cluster. Positions arginine 142–lysine 370 constitute a Radical SAM core domain. The 61-residue stretch at glutamine 373 to asparagine 433 folds into the TRAM domain.

The protein belongs to the methylthiotransferase family. MiaB subfamily. As to quaternary structure, monomer. [4Fe-4S] cluster serves as cofactor.

It is found in the cytoplasm. The catalysed reaction is N(6)-dimethylallyladenosine(37) in tRNA + (sulfur carrier)-SH + AH2 + 2 S-adenosyl-L-methionine = 2-methylsulfanyl-N(6)-dimethylallyladenosine(37) in tRNA + (sulfur carrier)-H + 5'-deoxyadenosine + L-methionine + A + S-adenosyl-L-homocysteine + 2 H(+). Its function is as follows. Catalyzes the methylthiolation of N6-(dimethylallyl)adenosine (i(6)A), leading to the formation of 2-methylthio-N6-(dimethylallyl)adenosine (ms(2)i(6)A) at position 37 in tRNAs that read codons beginning with uridine. The protein is tRNA-2-methylthio-N(6)-dimethylallyladenosine synthase of Hydrogenobaculum sp. (strain Y04AAS1).